Consider the following 57-residue polypeptide: MGNNEEYFIDVNDLSIDVFDVVEQGGAVTALTADHGMPEVGASTNCFCYICCSCSSN.

A propeptide spans 1–42 (MGNNEEYFIDVNDLSIDVFDVVEQGGAVTALTADHGMPEVGA) (removed in mature form). The segment at residues 43–44 (ST) is a cross-link (5-methyloxazole-4-carboxylic acid (Ser-Thr)). Residues 43–52 (STNCFCYICC) constitute a cross-link (pyridine-2,5-dicarboxylic acid (Ser-Cys) (with S-53)). Positions 43-53 (STNCFCYICCS) form a cross-link, pyridine-2,5-dicarboxylic acid (Ser-Ser) (with C-52). The thiazole-4-carboxylic acid (Asn-Cys) cross-link spans 45 to 46 (NC). A cross-link (thiazoline-4-carboxylic acid (Phe-Cys)) is located at residues 47-48 (FC). Ile-50 bears the 5-hydroxy-3-methylproline (Ile) mark. The segment at residues 50–51 (IC) is a cross-link (thiazole-4-carboxylic acid (Ile-Cys)). Residues 51-52 (CC) constitute a cross-link (thiazole-4-carboxylic acid (Cys-Cys)). Positions 53 to 54 (SC) form a cross-link, thiazole-4-carboxylic acid (Ser-Cys). 2,3-didehydroalanine (Ser) occurs at positions 55 and 56. Asn-57 is a propeptide (removed in mature form).

Post-translationally, maturation of thiazole and oxazole containing antibiotics involves the enzymatic condensation of a Cys, Ser or Thr with the alpha-carbonyl of the preceding amino acid to form a thioether or ether bond, then dehydration to form a double bond with the alpha-amino nitrogen. Thiazoline or oxazoline ring are dehydrogenated to form thiazole or oxazole rings. In terms of processing, maturation of pyridinyl containing antibiotics involves the cross-linking of a Ser and a Cys-Ser pair usually separated by 7 or 8 residues along the peptide chain. The Ser residues are dehydrated to didehydroalanines, then bonded between their beta carbons. The alpha carbonyl of the Cys condenses with alpha carbon of the first Ser to form a pyridinyl ring. The ring may be multiply dehydrogenated to form a pyridine ring with loss of the amino nitrogen of the first Ser.

The protein resides in the secreted. In terms of biological role, has bacteriocidal activity against both aerobic and anaerobic Gram-positive bacteria. Inhibits growth of B.subtilis (MIC=0.047 ug/ml) and methicillin-resistant S.aureus (MRSA) (MIC=0.047 ug/ml). Has poor activity against Gram-negative bacteria, with the exception of B.fragilis. Inhibits bacterial protein biosynthesis by acting on elongation factor Tu (EF-Tu). Full antibiotic activity depends on the presence of the modified residue Ile-50. This chain is Thiocillin GE37468 (getA), found in Streptomyces sp.